The following is a 131-amino-acid chain: MLNDLISDGLTRIRNASMRRLDTTKLLHSNVVESVLKILAEKGYIESYNLIEEDNKKFINVVLKYNEHGKSAINEITKISKPGRRIYQTKDEIKRFKNGYGTVIVSTSKGVMSGIEASKAGVGGEVLCTVW.

This sequence belongs to the universal ribosomal protein uS8 family. As to quaternary structure, part of the 30S ribosomal subunit. Contacts proteins S5 and S12.

In terms of biological role, one of the primary rRNA binding proteins, it binds directly to 16S rRNA central domain where it helps coordinate assembly of the platform of the 30S subunit. The sequence is that of Small ribosomal subunit protein uS8 from Campylobacter hominis (strain ATCC BAA-381 / DSM 21671 / CCUG 45161 / LMG 19568 / NCTC 13146 / CH001A).